Consider the following 356-residue polypeptide: S-adenosylmethionine:tRNA ribosyltransferase-isomerase (356 aa).

This sequence belongs to the QueA family. Monomer.

Its subcellular location is the cytoplasm. The catalysed reaction is 7-aminomethyl-7-carbaguanosine(34) in tRNA + S-adenosyl-L-methionine = epoxyqueuosine(34) in tRNA + adenine + L-methionine + 2 H(+). The protein operates within tRNA modification; tRNA-queuosine biosynthesis. In terms of biological role, transfers and isomerizes the ribose moiety from AdoMet to the 7-aminomethyl group of 7-deazaguanine (preQ1-tRNA) to give epoxyqueuosine (oQ-tRNA). This chain is S-adenosylmethionine:tRNA ribosyltransferase-isomerase, found in Escherichia coli O81 (strain ED1a).